A 335-amino-acid polypeptide reads, in one-letter code: Nucleoid-associated protein YejK (335 aa).

This sequence belongs to the YejK family.

The protein localises to the cytoplasm. The protein resides in the nucleoid. This is Nucleoid-associated protein YejK from Shigella dysenteriae serotype 1 (strain Sd197).